A 455-amino-acid chain; its full sequence is Phosphomethylpyrimidine synthase (455 aa).

Substrate-binding positions include Asn-80, Met-109, Tyr-139, His-175, Ser-195–Gly-197, Asp-236–Arg-239, and Glu-275. His-279 contributes to the Zn(2+) binding site. Tyr-302 lines the substrate pocket. Residue His-343 participates in Zn(2+) binding. [4Fe-4S] cluster-binding residues include Cys-423, Cys-426, and Cys-431.

The protein belongs to the ThiC family. The cofactor is [4Fe-4S] cluster.

It catalyses the reaction 5-amino-1-(5-phospho-beta-D-ribosyl)imidazole + S-adenosyl-L-methionine = 4-amino-2-methyl-5-(phosphooxymethyl)pyrimidine + CO + 5'-deoxyadenosine + formate + L-methionine + 3 H(+). It functions in the pathway cofactor biosynthesis; thiamine diphosphate biosynthesis. Functionally, catalyzes the synthesis of the hydroxymethylpyrimidine phosphate (HMP-P) moiety of thiamine from aminoimidazole ribotide (AIR) in a radical S-adenosyl-L-methionine (SAM)-dependent reaction. The polypeptide is Phosphomethylpyrimidine synthase (Synechococcus sp. (strain JA-2-3B'a(2-13)) (Cyanobacteria bacterium Yellowstone B-Prime)).